A 307-amino-acid polypeptide reads, in one-letter code: Transaldolase (307 aa).

Catalysis depends on K125, which acts as the Schiff-base intermediate with substrate.

This sequence belongs to the transaldolase family. Type 1 subfamily.

The protein localises to the cytoplasm. The catalysed reaction is D-sedoheptulose 7-phosphate + D-glyceraldehyde 3-phosphate = D-erythrose 4-phosphate + beta-D-fructose 6-phosphate. The protein operates within carbohydrate degradation; pentose phosphate pathway; D-glyceraldehyde 3-phosphate and beta-D-fructose 6-phosphate from D-ribose 5-phosphate and D-xylulose 5-phosphate (non-oxidative stage): step 2/3. In terms of biological role, transaldolase is important for the balance of metabolites in the pentose-phosphate pathway. This Pseudomonas aeruginosa (strain ATCC 15692 / DSM 22644 / CIP 104116 / JCM 14847 / LMG 12228 / 1C / PRS 101 / PAO1) protein is Transaldolase.